Consider the following 60-residue polypeptide: Large ribosomal subunit protein bL32 (60 aa).

This sequence belongs to the bacterial ribosomal protein bL32 family.

This chain is Large ribosomal subunit protein bL32, found in Desulfovibrio desulfuricans (strain ATCC 27774 / DSM 6949 / MB).